The primary structure comprises 119 residues: Large ribosomal subunit protein bL20 (119 aa).

The protein belongs to the bacterial ribosomal protein bL20 family.

Its function is as follows. Binds directly to 23S ribosomal RNA and is necessary for the in vitro assembly process of the 50S ribosomal subunit. It is not involved in the protein synthesizing functions of that subunit. In Thermoanaerobacter sp. (strain X514), this protein is Large ribosomal subunit protein bL20.